Consider the following 670-residue polypeptide: MKKIKIVPLILIVVVVGFGIYFYASKDKEINNTIDAIEDKNFKQVYKDSSYISKSDNGEVEMTERPIKIYNSLGVKDINIQDRKIKKVSKNKKRVDAQYKIKTNYGNIDRNVQFNFVKEDGMWKLDWDHSVIIPGMQKDQSIHIENLKSERGKILDRNNVELANTGTHMRLGIVPKNVSKKDYKAIAKELSISEDYINNKWIKIGYKMIPSFHFKTVKKMDEYLSDFAKKFHLTTNETESRNYPLGKATSHLLGYVGPINSEELKQKEYKGYKDDAVIGKKGLEKLYDKKLQHEDGYRVTIVRVDDNSNTIAHTLIEKKKKDGKDIQLTIDAKVQKSIYNNMKNDYGSGTAIHPQTGELLALVSTPSYDVYPFMYGMSNEEYNKLTEDKKEPLLNKFQITTSPGSTQKILTAMIGLNNKTLDDKTSYKIDGKGWQKDKSWGGYNVTRYEVVNGNIDLKQAIESSDNIFFARVALELGSKKFEKGMKKLGVGEDIPSDYPFYNAQISNKNLDNEILLADSGYGQGEILINPVQILSIYSALENNGNINAPHLLKDTKNKVWKKNIISKENINLLNDGMQQVVNKTHKEDIYRSYANLIGKSGTAELKMKQGETGRQIGWFISYDKDNPNMMMAINVKDVQDKGMASYNAKISGKVYDELYENGNKKYDIDE.

A helical membrane pass occupies residues 4-24 (IKIVPLILIVVVVGFGIYFYA). A penicillin contacts are provided by S25 and S405. The Acyl-ester intermediate role is filled by S405.

It belongs to the transpeptidase family.

The protein localises to the cell membrane. The chain is Beta-lactam-inducible penicillin-binding protein (pbp) from Staphylococcus aureus.